A 344-amino-acid polypeptide reads, in one-letter code: Nuclear distribution protein nudE homolog 1 (344 aa).

Residues 1 to 93 (MEDSGKTFES…MQHSEGYRQI (93 aa)) are self-association. Positions 18–188 (WRDLAMTYKQ…ELAVQQKQDK (171 aa)) form a coiled coil. The segment at 88–156 (EGYRQISALE…ERNAFLESEL (69 aa)) is interaction with PAFAH1B1. The segment at 167–290 (QRLKDEARDL…QSPSRTSGPA (124 aa)) is interaction with CENPF. The segment at 181-246 (AVQQKQDKPR…DSSTSGTPLT (66 aa)) is disordered. Residue serine 211 is modified to Phosphoserine. Phosphothreonine occurs at positions 215 and 228. Serine 239 is modified (phosphoserine). Residues threonine 243 and threonine 246 each carry the phosphothreonine modification. Cysteine 274 carries S-palmitoyl cysteine; by ZDHHC2, ZDHHC3 and ZDHHC7 lipidation. The segment covering 279–289 (YDQSPSRTSGP) has biased composition (polar residues). Residues 279–337 (YDQSPSRTSGPASGRGTKNRDGVDRRPGSTSVGDKGSGKRLEFGKPASEPASPALPSAQ) are disordered. Phosphoserine is present on serine 282. The span at 296 to 305 (KNRDGVDRRP) shows a compositional bias: basic and acidic residues. Phosphoserine is present on serine 309. Residues 324 to 336 (PASEPASPALPSA) show a composition bias toward low complexity.

Belongs to the nudE family. Homodimer. Interacts with dynactin and PCM1. Interacts with CENPF, LIS1, CNTRL, dynein, tubulin gamma, PAFAH1B1, PCNT, SLMAP and TCP1. Interacts with ZNF365. Interacts with RAB9A; the interaction leads to RAB9A-dynein motor tethering. Interacts (via C-terminus) with MCRS1 (via C-terminus); phosphorylation of NDE1 inhibits the interaction. Post-translationally, phosphorylated in mitosis. Phosphorylation at Thr-246 is essential for the G2/M transition. Highly expressed in ovary. Also expressed in brain, heart, kidney, large intestine, liver, lung, small intestine and testis.

The protein localises to the cytoplasm. It is found in the cytoskeleton. The protein resides in the microtubule organizing center. It localises to the centrosome. Its subcellular location is the spindle. The protein localises to the chromosome. It is found in the centromere. The protein resides in the kinetochore. It localises to the cleavage furrow. Its subcellular location is the cytoplasmic vesicle membrane. Its function is as follows. Required for centrosome duplication and formation and function of the mitotic spindle. Essential for the development of the cerebral cortex. May regulate the production of neurons by controlling the orientation of the mitotic spindle during division of cortical neuronal progenitors of the proliferative ventricular zone of the brain. Orientation of the division plane perpendicular to the layers of the cortex gives rise to two proliferative neuronal progenitors whereas parallel orientation of the division plane yields one proliferative neuronal progenitor and a postmitotic neuron. A premature shift towards a neuronal fate within the progenitor population may result in an overall reduction in the final number of neurons and an increase in the number of neurons in the deeper layers of the cortex. Acts as a RAB9A/B effector that tethers RAB9-associated late endosomes to the dynein motor for their retrograde transport to the trans-Golgi network. The chain is Nuclear distribution protein nudE homolog 1 from Mus musculus (Mouse).